Here is a 284-residue protein sequence, read N- to C-terminus: NADH-cytochrome b5 reductase 1 (284 aa).

A helical transmembrane segment spans residues 7 to 27; it reads KLVVVIVIVVVPLLFKFIIGP. In terms of domain architecture, FAD-binding FR-type spans 38-142; it reads NDFQSFPLVE…KGPRGNYHYE (105 aa). 148-180 contacts FAD; it reads HLGMIAGGTGIAPMYQIMKAIAMDSHDTTKVSL.

Belongs to the flavoprotein pyridine nucleotide cytochrome reductase family. Monomer. Component of the 2-(3-amino-3-carboxypropyl)histidine synthase complex composed of DPH1, DPH2, KTI11/DPH3 and a NADH-dependent reductase, predominantly CBR1. Interacts with KTI11/DPH3. Interacts with STE20. It depends on FAD as a cofactor.

The protein resides in the mitochondrion outer membrane. It carries out the reaction 2 Fe(III)-[cytochrome b5] + NADH = 2 Fe(II)-[cytochrome b5] + NAD(+) + H(+). The catalysed reaction is 2 Fe(3+)-[Dph3] + NADH = 2 Fe(2+)-[Dph3] + NAD(+) + H(+). It participates in protein modification; peptidyl-diphthamide biosynthesis. With respect to regulation, competitively inhibited by NAD(+). Inhibited by mercurials such as p-chloromercuribenzoate (PCMB) and HgCl(2). Enzymatic activity increases under anaerobic conditions. NADH-dependent reductase for KTI11/DPH3 and cytochrome b5. Required for the first step of diphthamide biosynthesis, a post-translational modification of histidine which occurs in elongation factor 2. DPH1 and DPH2 transfer a 3-amino-3-carboxypropyl (ACP) group from S-adenosyl-L-methionine (SAM) to a histidine residue, the reaction is assisted by a reduction system comprising KTI11/DPH3 and a NADH-dependent reductase, predominantly CBR1. By reducing KTI11/DPH3, also involved in the formation of the tRNA wobble base modification mcm5s 2U (5-methoxycarbonylmethyl-2-thiouridine), mediated by the elongator complex. The cytochrome b5/NADH cytochrome b5 reductase electron transfer system supports the catalytic activity of several sterol biosynthetic enzymes. Plays a role in bud morphology. The polypeptide is NADH-cytochrome b5 reductase 1 (CBR1) (Saccharomyces cerevisiae (strain YJM789) (Baker's yeast)).